Consider the following 237-residue polypeptide: Ankyrin repeat protein 14 (237 aa).

ANK repeat units lie at residues Arg-27–Ile-56 and Asn-60–Cys-90.

May be involved in virus-host protein interaction through the ankyrin repeats. The chain is Ankyrin repeat protein 14 from Vaccinia virus (strain Western Reserve) (VACV).